Consider the following 141-residue polypeptide: Cystatin (141 aa).

The signal sequence occupies residues 1–26 (MVHSQLPVAGPLRLLCALLLLPSATM). A Cystatin domain is found at 29–129 (GGLSPRSVTD…CRFQVWSRPW (101 aa)). The short motif at 73 to 77 (QVVSG) is the Secondary area of contact element. 2 disulfide bridges follow: Cys91–Cys107 and Cys120–Cys140.

The protein belongs to the cystatin family. Expressed at a low level by the venom gland (at protein level).

It localises to the secreted. Its function is as follows. Inhibits various C1 cysteine proteases including cathepsin L, papain and cathepsin B. This protein has no toxic activity and its function in the venom is unknown. It may play a role as a housekeeping or regulatory protein. In Pseudechis porphyriacus (Red-bellied black snake), this protein is Cystatin.